A 111-amino-acid chain; its full sequence is Antirepressor protein CarS (111 aa).

In terms of assembly, monomer. Interacts with CarA and CarH.

Involved in carotenoid biosynthesis. Antagonizes the transcriptional repressor proteins CarA and CarH by preventing their binding to DNA. Can also dissociate preformed CarA-DNA complexes. Does not bind DNA. The protein is Antirepressor protein CarS (carS) of Myxococcus xanthus.